The primary structure comprises 557 residues: Tektin-5 (557 aa).

Residues 302–386 (DNIRHAQNMR…LLERAIVAKE (85 aa)) are a coiled coil. 6 repeat units span residues 507–512 (CSGSAL), 513–518 (CKGPAS), 519–524 (CGGGAS), 525–530 (CGGGAS), 531–536 (CGGHAP), and 537–541 (CGSAL). The tract at residues 507–541 (CSGSALCKGPASCGGGASCGGGASCGGHAPCGSAL) is 6 X 6 AA approximate tandem repeats of C-[GSK]-G-[GSPH]-A-[SLP].

It belongs to the tektin family. As to quaternary structure, microtubule inner protein component of sperm flagellar doublet microtubules. Interacts with TEKT3. Ubiquitinated, leading to its degradation. Deubiquitinated by USP16, promoting its stability. As to expression, strongly expressed in germ cells of the testis (at protein level). Expressed in spermatozoa. Also detected in brain.

Its subcellular location is the cytoplasm. The protein localises to the cytoskeleton. It is found in the flagellum axoneme. Its function is as follows. Sperm-specific microtubule inner protein (MIP) part of the dynein-decorated doublet microtubules (DMTs) in flagellar axoneme. Forms an extensive interaction network in different conformations that reinforces the helix bundle composed by other tektin proteins (TEKT1 to TEKT4) and MIPs to anchor the tektin bundle onto the tubulin wall of A-tubule of the sperm flagellum. The sequence is that of Tektin-5 from Mus musculus (Mouse).